The chain runs to 198 residues: Putative pseudouridine methyltransferase (198 aa).

S-adenosyl-L-methionine-binding residues include Met-132 and Cys-186.

Belongs to the methyltransferase superfamily. TrmY family.

The protein resides in the cytoplasm. In Shewanella baltica (strain OS185), this protein is Putative pseudouridine methyltransferase.